The sequence spans 935 residues: Progesterone receptor (935 aa).

Positions 1–49 (MTELKAKGLRAPHVAGSPSSPKVGSPLPCRQATGQFPGSQTSDTLPEVS) are disordered. Residues 1-164 (MTELKAKGLR…PATQRVLSPL (164 aa)) are AF3; mediates transcriptional activation. Positions 1–568 (MTELKAKGLR…YSFESLPQKI (568 aa)) are modulating, Pro-Rich. S20 is subject to Phosphoserine. Polar residues predominate over residues 32–44 (ATGQFPGSQTSDT). Residues 55 to 59 (LDGLL) carry the LXXL motif 1 motif. Positions 62–158 (RICQAQDPPD…EDPPAAPATQ (97 aa)) are disordered. A Phosphoserine modification is found at S81. Positions 115 to 119 (LDTLW) match the LXXL motif 2 motif. Phosphoserine occurs at positions 130 and 162. Positions 165–305 (MSRSGGKAGD…LATTVTDFIH (141 aa)) are mediates transcriptional transrepression. A Nuclear localization signal motif is present at residues 183 to 187 (KVLPR). The tract at residues 187-233 (RGLSPSRQLLLPTSGSPHWSGAPVKPSPQPAAVEVEEEDGSESEDSA) is disordered. Residue S190 is modified to Phosphoserine. The span at 191-203 (PSRQLLLPTSGSP) shows a compositional bias: polar residues. Residue S213 is modified to Phosphoserine. Acidic residues predominate over residues 220-231 (EVEEEDGSESED). S294 is modified (phosphoserine; by MAPK1). The tract at residues 328–365 (SYDGGSGAASAFAPPRSSPSASSTPVPGSDFPDCAYAP) is disordered. Residues 335–356 (AASAFAPPRSSPSASSTPVPGS) are compositionally biased toward low complexity. S345 carries the phosphoserine; by MAPK modification. K388 participates in a covalent cross-link: Glycyl lysine isopeptide (Lys-Gly) (interchain with G-Cter in SUMO); alternate. Residue K388 forms a Glycyl lysine isopeptide (Lys-Gly) (interchain with G-Cter in ubiquitin); alternate linkage. The disordered stretch occupies residues 390–452 (EEEGAEASTR…PASASVSSAS (63 aa)). Position 400 is a phosphoserine; by CDK2 (S400). Positions 418–433 (PLGPPPPLPPRAPPSR) are enriched in pro residues. Low complexity predominate over residues 434 to 452 (PGEAAVTAAPASASVSSAS). The tract at residues 456–548 (STLECILYKA…VYPPYLNYLR (93 aa)) is AF1; mediates transcriptional activation. K533 participates in a covalent cross-link: Glycyl lysine isopeptide (Lys-Gly) (interchain with G-Cter in SUMO). NR C4-type zinc fingers lie at residues 569–589 (CLICGDEASGCHYGVLTCGSC) and 605–629 (CAGRNDCIVDKIRRKNCPACRLRKC). Positions 569 to 641 (CLICGDEASG…AGMVLGGRKF (73 aa)) form a DNA-binding region, nuclear receptor. S678 is modified (phosphoserine). Positions 681–915 (QDIQLIPPLI…EFPEMMSEVI (235 aa)) constitute an NR LBD domain. Residues 689–935 (LINLLLSIEP…MVKPLLFHKK (247 aa)) are AF2; mediates transcriptional activation. R768 is a binding site for progesterone.

The protein belongs to the nuclear hormone receptor family. Interacts with SMARD1 and UNC45A. Interacts with CUEDC2; the interaction promotes ubiquitination, decreases sumoylation, and represses transcriptional activity. Interacts with PIAS3; the interaction promotes sumoylation of PR in a hormone-dependent manner, inhibits DNA-binding, and alters nuclear export. Interacts with SP1; the interaction requires ligand-induced phosphorylation on Ser-345 by ERK1/2-MAPK. Interacts with PRMT2. Interacts with NCOA2 and NCOA1. Interacts with KLF9. Interacts with GTF2B. Phosphorylated on multiple serine sites. Several of these sites are hormone-dependent. Phosphorylation on Ser-294 is highly hormone-dependent and modulates ubiquitination and sumoylation on Lys-388. Phosphorylation on Ser-345 also requires induction by hormone. Basal phosphorylation on Ser-81, Ser-162, Ser-190 and Ser-400 is increased in response to progesterone and can be phosphorylated in vitro by the CDK2-A1 complex. Increased levels of phosphorylation on Ser-400 also in the presence of EGF, heregulin, IGF, PMA and FBS. Phosphorylation at this site by CDK2 is ligand-independent, and increases nuclear translocation and transcriptional activity. Phosphorylation at Ser-162 and Ser-294, but not at Ser-190, is impaired during the G(2)/M phase of the cell cycle. Phosphorylation on Ser-345 by ERK1/2 MAPK is required for interaction with SP1. Post-translationally, sumoylation is hormone-dependent and represses transcriptional activity. Sumoylation on all three sites is enhanced by PIAS3. Desumoylated by SENP1. Sumoylation on Lys-388, the main site of sumoylation, is repressed by ubiquitination on the same site, and modulated by phosphorylation at Ser-294. In terms of processing, ubiquitination is hormone-dependent and represses sumoylation on the same site. Promoted by MAPK-mediated phosphorylation on Ser-294. Ubiquitinated by UBR5, leading to its degradation: UBR5 specifically recognizes and binds ligand-bound PGR when it is not associated with coactivators (NCOAs). In presence of NCOAs, the UBR5-degron is not accessible, preventing its ubiquitination and degradation. Palmitoylated by ZDHHC7 and ZDHHC21. Palmitoylation is required for plasma membrane targeting and for rapid intracellular signaling via ERK and AKT kinases and cAMP generation.

It is found in the nucleus. It localises to the cytoplasm. The steroid hormones and their receptors are involved in the regulation of eukaryotic gene expression and affect cellular proliferation and differentiation in target tissues. Transcriptional activator of several progesteron-dependent promoters in a variety of cell types. Involved in activation of SRC-dependent MAPK signaling on hormone stimulation. This chain is Progesterone receptor (PGR), found in Sapajus apella (Brown-capped capuchin).